The following is a 561-amino-acid chain: Eukaryotic translation initiation factor 3 subunit D-1 (561 aa).

Residues V98 to S164 form a disordered region. The segment covering K100–N121 has biased composition (basic residues). T128 bears the Phosphothreonine mark. The segment at E289 to P303 is RNA gate.

This sequence belongs to the eIF-3 subunit D family. As to quaternary structure, component of the eukaryotic translation initiation factor 3 (eIF-3) complex. The eIF-3 complex interacts with pix.

The protein localises to the cytoplasm. Its function is as follows. mRNA cap-binding component of the eukaryotic translation initiation factor 3 (eIF-3) complex, which is involved in protein synthesis of a specialized repertoire of mRNAs and, together with other initiation factors, stimulates binding of mRNA and methionyl-tRNAi to the 40S ribosome. The eIF-3 complex specifically targets and initiates translation of a subset of mRNAs involved in cell proliferation. In the eIF-3 complex, eif3d specifically recognizes and binds the 7-methylguanosine cap of a subset of mRNAs. The polypeptide is Eukaryotic translation initiation factor 3 subunit D-1 (Drosophila ananassae (Fruit fly)).